The sequence spans 264 residues: Thiazole synthase (264 aa).

The active-site Schiff-base intermediate with DXP is K98. Residues G159, 185–186 (AG), and 207–208 (AT) contribute to the 1-deoxy-D-xylulose 5-phosphate site.

Belongs to the ThiG family. As to quaternary structure, homotetramer. Forms heterodimers with either ThiH or ThiS.

The protein resides in the cytoplasm. It catalyses the reaction [ThiS sulfur-carrier protein]-C-terminal-Gly-aminoethanethioate + 2-iminoacetate + 1-deoxy-D-xylulose 5-phosphate = [ThiS sulfur-carrier protein]-C-terminal Gly-Gly + 2-[(2R,5Z)-2-carboxy-4-methylthiazol-5(2H)-ylidene]ethyl phosphate + 2 H2O + H(+). It participates in cofactor biosynthesis; thiamine diphosphate biosynthesis. Functionally, catalyzes the rearrangement of 1-deoxy-D-xylulose 5-phosphate (DXP) to produce the thiazole phosphate moiety of thiamine. Sulfur is provided by the thiocarboxylate moiety of the carrier protein ThiS. In vitro, sulfur can be provided by H(2)S. In Mycobacterium ulcerans (strain Agy99), this protein is Thiazole synthase.